The sequence spans 461 residues: Photosystem II CP43 reaction center protein (461 aa).

Residues 1 to 2 (ME) constitute a propeptide that is removed on maturation. Position 3 is an N-acetylthreonine (Thr3). A Phosphothreonine modification is found at Thr3. 5 consecutive transmembrane segments (helical) span residues 57–81 (LFEV…PHLA), 122–143 (LLGP…KDRN), 166–188 (KALY…RKIT), 243–263 (KPFA…LSYS), and 279–300 (WFNN…ASQA). Glu355 contributes to the [CaMn4O5] cluster binding site. The helical transmembrane segment at 435-459 (RARAAAAGFEKGIDRDFEPVLSMTP) threads the bilayer.

Belongs to the PsbB/PsbC family. PsbC subfamily. As to quaternary structure, PSII is composed of 1 copy each of membrane proteins PsbA, PsbB, PsbC, PsbD, PsbE, PsbF, PsbH, PsbI, PsbJ, PsbK, PsbL, PsbM, PsbT, PsbX, PsbY, PsbZ, Psb30/Ycf12, at least 3 peripheral proteins of the oxygen-evolving complex and a large number of cofactors. It forms dimeric complexes. It depends on Binds multiple chlorophylls and provides some of the ligands for the Ca-4Mn-5O cluster of the oxygen-evolving complex. It may also provide a ligand for a Cl- that is required for oxygen evolution. PSII binds additional chlorophylls, carotenoids and specific lipids. as a cofactor.

It is found in the plastid. It localises to the chloroplast thylakoid membrane. One of the components of the core complex of photosystem II (PSII). It binds chlorophyll and helps catalyze the primary light-induced photochemical processes of PSII. PSII is a light-driven water:plastoquinone oxidoreductase, using light energy to abstract electrons from H(2)O, generating O(2) and a proton gradient subsequently used for ATP formation. This chain is Photosystem II CP43 reaction center protein, found in Gossypium barbadense (Sea Island cotton).